A 225-amino-acid chain; its full sequence is 3-dehydroquinate dehydratase (225 aa).

3-dehydroquinate-binding positions include 30–32 and R62; that span reads EWR. Catalysis depends on H118, which acts as the Proton donor/acceptor. K143 serves as the catalytic Schiff-base intermediate with substrate. The 3-dehydroquinate site is built by R186, S205, and Q209.

It belongs to the type-I 3-dehydroquinase family. As to quaternary structure, homodimer.

It catalyses the reaction 3-dehydroquinate = 3-dehydroshikimate + H2O. Its pathway is metabolic intermediate biosynthesis; chorismate biosynthesis; chorismate from D-erythrose 4-phosphate and phosphoenolpyruvate: step 3/7. Functionally, involved in the third step of the chorismate pathway, which leads to the biosynthesis of aromatic amino acids. Catalyzes the cis-dehydration of 3-dehydroquinate (DHQ) and introduces the first double bond of the aromatic ring to yield 3-dehydroshikimate. The protein is 3-dehydroquinate dehydratase of Streptococcus mutans serotype c (strain ATCC 700610 / UA159).